A 76-amino-acid chain; its full sequence is MITKAVFALFFPFMLVVLFTRVTFNHYVAIALTAALLFASYLKGYTETYFIVGLDVVSLVAGGLYMAKKAAEKKEE.

At 1 to 5 the chain is on the extracellular side; it reads MITKA. Residues 6-22 form a helical membrane-spanning segment; that stretch reads VFALFFPFMLVVLFTRV. Topologically, residues 23–27 are cytoplasmic; it reads TFNHY. The helical transmembrane segment at 28 to 44 threads the bilayer; that stretch reads VAIALTAALLFASYLKG. Over 45-49 the chain is Extracellular; sequence YTETY. A helical transmembrane segment spans residues 50-66; that stretch reads FIVGLDVVSLVAGGLYM. Over 67–76 the chain is Cytoplasmic; sequence AKKAAEKKEE.

Its subcellular location is the cell membrane. This is Protein CsbA (csbA) from Bacillus subtilis (strain 168).